Here is a 702-residue protein sequence, read N- to C-terminus: Dissimilatory sulfite reductase MccA (702 aa).

Residues 1 to 39 (MLSGWSVLKGGNMKYWDKALLSLFMCVSTLSIAATHAVA) form the signal peptide. 4 residues coordinate heme c: Cys-155, Cys-158, His-159, and His-171. Positions 220 and 297 each coordinate substrate. Heme c is bound by residues Cys-314, Cys-317, His-318, Cys-351, Cys-354, His-355, His-360, Cys-372, Cys-375, and His-376. Position 378 (Arg-378) interacts with substrate. Cys-411 contributes to the Cu(+) binding site. Heme c is bound by residues His-423, Cys-430, Cys-433, His-434, His-437, Cys-474, Cys-477, His-478, His-491, Cys-496, Cys-499, and His-500. Cys-507 is a Cu(+) binding site. Residues His-528, Cys-574, Cys-590, His-591, and His-675 each coordinate heme c.

It belongs to the multiheme cytochrome c family. Homotrimer. The cofactor is Cu(+). It depends on heme c as a cofactor.

It is found in the periplasm. It carries out the reaction [protein]-disulfide + hydrogen sulfide + 2 A + 3 H2O = [protein]-dithiol + sulfite + 2 AH2 + H(+). It functions in the pathway sulfur metabolism; sulfite reduction. Functionally, respiratory sulfite reductase that catalyzes the reduction of sulfite to sulfide in a single step, consuming six electrons in the process. Required for sulfite respiration under anaerobic growth conditions. Has only marginal activity with nitrite. This chain is Dissimilatory sulfite reductase MccA, found in Wolinella succinogenes (strain ATCC 29543 / DSM 1740 / CCUG 13145 / JCM 31913 / LMG 7466 / NCTC 11488 / FDC 602W) (Vibrio succinogenes).